The following is a 249-amino-acid chain: GTP cyclohydrolase III (249 aa).

It belongs to the archaeal-type GTP cyclohydrolase family.

It catalyses the reaction GTP + 3 H2O = 2-amino-5-formylamino-6-(5-phospho-D-ribosylamino)pyrimidin-4(3H)-one + 2 phosphate + 2 H(+). Functionally, catalyzes the formation of 2-amino-5-formylamino-6-ribofuranosylamino-4(3H)-pyrimidinone ribonucleotide monophosphate and inorganic phosphate from GTP. Also has an independent pyrophosphate phosphohydrolase activity. This chain is GTP cyclohydrolase III, found in Methanothermobacter thermautotrophicus (strain ATCC 29096 / DSM 1053 / JCM 10044 / NBRC 100330 / Delta H) (Methanobacterium thermoautotrophicum).